We begin with the raw amino-acid sequence, 155 residues long: Ribosomal RNA large subunit methyltransferase H (155 aa).

S-adenosyl-L-methionine contacts are provided by residues Leu-73, Gly-104, and 123-128 (LSALTL).

This sequence belongs to the RNA methyltransferase RlmH family. As to quaternary structure, homodimer.

It is found in the cytoplasm. The catalysed reaction is pseudouridine(1915) in 23S rRNA + S-adenosyl-L-methionine = N(3)-methylpseudouridine(1915) in 23S rRNA + S-adenosyl-L-homocysteine + H(+). Specifically methylates the pseudouridine at position 1915 (m3Psi1915) in 23S rRNA. The polypeptide is Ribosomal RNA large subunit methyltransferase H (Chromohalobacter salexigens (strain ATCC BAA-138 / DSM 3043 / CIP 106854 / NCIMB 13768 / 1H11)).